The sequence spans 103 residues: MSGRGKGGKGLGKGGAKRHRKVLRDNIQGITKPAIRRLARRGGVKRISGLIYEETRSVLKVFLENVIRDAVTYCEHAKRKTVTAMDVVYALKHQGRTLYGFGG.

The span at 1 to 14 shows a compositional bias: gly residues; that stretch reads MSGRGKGGKGLGKG. A disordered region spans residues 1–20; it reads MSGRGKGGKGLGKGGAKRHR. The residue at position 2 (Ser-2) is an N-acetylserine. 2 positions are modified to N6-acetyl-N6-methyllysine; alternate: Lys-6 and Lys-13. N6-acetyllysine is present on Lys-17. A DNA-binding region spans residues 17-21; the sequence is KRHRK. Residue Lys-21 is modified to N6-methyllysine.

This sequence belongs to the histone H4 family. As to quaternary structure, the nucleosome is a histone octamer containing two molecules each of H2A, H2B, H3 and H4 assembled in one H3-H4 heterotetramer and two H2A-H2B heterodimers. The octamer wraps approximately 147 bp of DNA.

It is found in the nucleus. The protein localises to the chromosome. Core component of nucleosome. Nucleosomes wrap and compact DNA into chromatin, limiting DNA accessibility to the cellular machineries which require DNA as a template. Histones thereby play a central role in transcription regulation, DNA repair, DNA replication and chromosomal stability. DNA accessibility is regulated via a complex set of post-translational modifications of histones, also called histone code, and nucleosome remodeling. This is Histone H4 from Ascaris suum (Pig roundworm).